The chain runs to 141 residues: Lutropin subunit beta (141 aa).

An N-terminal signal peptide occupies residues 1–18; that stretch reads MGTLQGLLLWLLLGTGGA. 6 disulfides stabilise this stretch: Cys29–Cys77, Cys43–Cys92, Cys46–Cys130, Cys54–Cys108, Cys58–Cys110, and Cys113–Cys120. N-linked (GlcNAc...) asparagine glycosylation is present at Asn33.

This sequence belongs to the glycoprotein hormones subunit beta family. Heterodimer of a common alpha chain and a unique beta chain which confers biological specificity to thyrotropin, lutropin, follitropin and gonadotropin.

It localises to the secreted. In terms of biological role, promotes spermatogenesis and ovulation by stimulating the testes and ovaries to synthesize steroids. The protein is Lutropin subunit beta (LHB) of Oryctolagus cuniculus (Rabbit).